The following is a 256-amino-acid chain: MKVEALDKFWADKSRYDLAEKRFYEGPQKVTDRSHYSPLVSEIAKAREHIQNSLEKIDGVTLDDGLNSELAKRLAQLEGEHKELKTQVSLLNELLTATVKRLETQLKLTNGVSKEPEVEAKKPEANDDDDDVDLFGSDSEEEDGEAARIREERLAAYAAKKAKKVQIIAKSNIILDVKPWDDETDLKVMETEIRKITQDGLLWGASKFVPVAFGIQKLSISCVVEDDKVSIDWLTEEIEKLEDFVQSVDIAAFNKI.

Phosphoserine is present on residues Ser-37, Ser-53, and Ser-89. The tract at residues Asn-110–Ala-146 is disordered. A compositionally biased stretch (basic and acidic residues) spans Lys-114 to Ala-125. Residues Asn-126–Gly-144 show a composition bias toward acidic residues. 2 positions are modified to phosphoserine: Ser-137 and Ser-139.

Belongs to the EF-1-beta/EF-1-delta family. In terms of assembly, EF-1 is composed of 4 subunits: alpha, beta, delta, and gamma.

Its function is as follows. EF-1-beta and EF-1-delta stimulate the exchange of GDP bound to EF-1-alpha to GTP. The chain is Probable elongation factor 1-delta (eEF1delta) from Drosophila melanogaster (Fruit fly).